Here is a 107-residue protein sequence, read N- to C-terminus: MGGKTVTRADLVEAVYRKVGLSRTESAALVEMILDEVCDAIVNGETVKLSSFATFQVRDKNERIGRNPKTGEEVPILPRRVMTFKASNVLKQRILQEHQKRQGKTSK.

It belongs to the bacterial histone-like protein family. As to quaternary structure, heterodimer of an alpha and a beta chain.

Its function is as follows. This protein is one of the two subunits of integration host factor, a specific DNA-binding protein that functions in genetic recombination as well as in transcriptional and translational control. This is Integration host factor subunit alpha from Brucella suis (strain ATCC 23445 / NCTC 10510).